Consider the following 508-residue polypeptide: Histidine ammonia-lyase (508 aa).

Positions 145–147 form a cross-link, 5-imidazolinone (Ala-Gly); the sequence is ASG. Ser146 is modified (2,3-didehydroalanine (Ser)).

This sequence belongs to the PAL/histidase family. Post-translationally, contains an active site 4-methylidene-imidazol-5-one (MIO), which is formed autocatalytically by cyclization and dehydration of residues Ala-Ser-Gly.

Its subcellular location is the cytoplasm. The catalysed reaction is L-histidine = trans-urocanate + NH4(+). The protein operates within amino-acid degradation; L-histidine degradation into L-glutamate; N-formimidoyl-L-glutamate from L-histidine: step 1/3. The chain is Histidine ammonia-lyase from Myxococcus xanthus (strain DK1622).